Reading from the N-terminus, the 245-residue chain is MARERREIRRIESAAARQVTFSKRRRGLFKKAEELAVLCDADVALVVFSSTGKLSQFASSNMNEIIDKYTTHSKNLGKTDKQPSIDLNFFLIILLRTYTNSYAYIHLLLQLEHSKCSSLNEQLAEASLQLRQMRGEELEGLSVEELQQMEKNLEAGLQRVLCTKDQQFMQEISELQRKGIQLAEENMRLRDQMPQVPTAGLAVPDTENVLTEDGQSSESVMTALNSGSSQDNDDGSDISLKLGLP.

Positions 1–61 (MARERREIRR…GKLSQFASSN (61 aa)) constitute an MADS-box domain. The 91-residue stretch at 109-199 (LQLEHSKCSS…RDQMPQVPTA (91 aa)) folds into the K-box domain. Positions 197 to 245 (PTAGLAVPDTENVLTEDGQSSESVMTALNSGSSQDNDDGSDISLKLGLP) are disordered. Residues 213–224 (DGQSSESVMTAL) show a composition bias toward polar residues.

Expressed in roots, shoots and developing panicles. Expressed in shoots.

It localises to the nucleus. Functionally, transcription factor that acts as a negative regulator of brassinosteroid signaling. This chain is MADS-box transcription factor 55 (MADS55), found in Oryza sativa subsp. japonica (Rice).